A 78-amino-acid chain; its full sequence is Delta-conotoxin TxVIA (78 aa).

Positions 1–22 (MKLTCMMIVAVLFLTAWTFATA) are cleaved as a signal peptide. The propeptide occupies 23–49 (DDPRNGLGNLFSNAHHEMKNPEASKLN). Cystine bridges form between C53/C68, C60/C72, and C67/C77. M59 bears the Methionine sulfoxide; partial mark.

It belongs to the conotoxin O1 superfamily. In terms of tissue distribution, expressed by the venom duct.

It localises to the secreted. Its function is as follows. Delta-conotoxins bind to site 6 of voltage-gated sodium channels (Nav) and inhibit the inactivation process. Binding of this toxin is strongly calcium-dependent but not voltage-dependent. The binding site is most likely on the extracellular side of the sodium channel. Binds receptor sites on both mollusk and rat central nervous system, but despite its high affinity binding to rat sodium channel, it has no functional effect in vivo and in vitro on it. Also has no effect on Gambusia fish. Is important in mollusk for the paralysis of the prey. Upon injection of the peptide, a subordinate lobster assumes an exaggerated dominant posture (of a 'King-Kong' lobster!). The sequence is that of Delta-conotoxin TxVIA from Conus textile (Cloth-of-gold cone).